Reading from the N-terminus, the 315-residue chain is Ornithine carbamoyltransferase (315 aa).

Carbamoyl phosphate contacts are provided by residues 53–56, glutamine 80, arginine 104, and 131–134; these read STRT and HPCQ. Residues asparagine 163, aspartate 227, and 231-232 each bind L-ornithine; that span reads SM. Residues 267-268 and arginine 295 each bind carbamoyl phosphate; that span reads CL.

It belongs to the aspartate/ornithine carbamoyltransferase superfamily. OTCase family.

The protein resides in the cytoplasm. It carries out the reaction carbamoyl phosphate + L-ornithine = L-citrulline + phosphate + H(+). Its pathway is amino-acid degradation; L-arginine degradation via ADI pathway; carbamoyl phosphate from L-arginine: step 2/2. In terms of biological role, reversibly catalyzes the transfer of the carbamoyl group from carbamoyl phosphate (CP) to the N(epsilon) atom of ornithine (ORN) to produce L-citrulline. This chain is Ornithine carbamoyltransferase, found in Rhodococcus opacus (strain B4).